We begin with the raw amino-acid sequence, 159 residues long: Ascorbate-specific PTS system EIIA component (159 aa).

One can recognise a PTS EIIA type-2 domain in the interval 9 to 152 (VLKQHHTVRL…TSLFAVIDRV (144 aa)). His71 serves as the catalytic Tele-phosphohistidine intermediate. Position 71 is a phosphohistidine (His71).

It localises to the cytoplasm. Functionally, the phosphoenolpyruvate-dependent sugar phosphotransferase system (sugar PTS), a major carbohydrate active transport system, catalyzes the phosphorylation of incoming sugar substrates concomitantly with their translocation across the cell membrane. The enzyme II UlaABC PTS system is involved in ascorbate transport. The polypeptide is Ascorbate-specific PTS system EIIA component (ulaC) (Mycoplasma pneumoniae (strain ATCC 29342 / M129 / Subtype 1) (Mycoplasmoides pneumoniae)).